A 453-amino-acid polypeptide reads, in one-letter code: Exopolyphosphatase PRUNE1 (453 aa).

At methionine 1 the chain carries N-acetylmethionine. Residues aspartate 28, aspartate 30, aspartate 106, and aspartate 179 each coordinate Mn(2+). The short motif at 106–108 (DHH) is the DHH motif element. The interval 393-420 (SLLSGLSQDEEEPPLPPTPMNSLVDECP) is essential for homodimerization. Residues 396–419 (SGLSQDEEEPPLPPTPMNSLVDEC) form a disordered region. At serine 399 the chain carries Phosphoserine. The residue at position 410 (threonine 410) is a Phosphothreonine. The residue at position 414 (serine 414) is a Phosphoserine.

It belongs to the PPase class C family. Prune subfamily. Homooligomer. Able to homodimerize via its C-terminal domain. Interacts with NME1. Interacts with GSK3; at focal adhesion complexes where paxillin and vinculin are colocalized. Mn(2+) serves as cofactor.

Its subcellular location is the cytoplasm. The protein resides in the nucleus. It localises to the cell junction. The protein localises to the focal adhesion. It catalyses the reaction diphosphate + H2O = 2 phosphate + H(+). With respect to regulation, activated by magnesium ions and inhibited by manganese ions. Inhibited by dipyridamole, moderately sensitive to IBMX and inhibited by vinpocetine. Phosphodiesterase (PDE) that has higher activity toward cAMP than cGMP, as substrate. Plays a role in cell proliferation, is able to induce cell motility and acts as a negative regulator of NME1. The sequence is that of Exopolyphosphatase PRUNE1 (PRUNE1) from Bos taurus (Bovine).